Consider the following 260-residue polypeptide: Shikimate dehydrogenase (NADP(+)) (260 aa).

Residues 14 to 16 and Thr-60 each bind shikimate; that span reads SAS. Lys-64 acts as the Proton acceptor in catalysis. Residues Asn-85 and Asp-100 each contribute to the shikimate site. NADP(+) is bound by residues 121–125, 145–150, and Phe-201; these read GAGGA and NRTYER. A shikimate-binding site is contributed by Tyr-203. Gly-225 is an NADP(+) binding site.

This sequence belongs to the shikimate dehydrogenase family. In terms of assembly, homodimer.

The catalysed reaction is shikimate + NADP(+) = 3-dehydroshikimate + NADPH + H(+). It functions in the pathway metabolic intermediate biosynthesis; chorismate biosynthesis; chorismate from D-erythrose 4-phosphate and phosphoenolpyruvate: step 4/7. Involved in the biosynthesis of the chorismate, which leads to the biosynthesis of aromatic amino acids. Catalyzes the reversible NADPH linked reduction of 3-dehydroshikimate (DHSA) to yield shikimate (SA). In Pyrobaculum neutrophilum (strain DSM 2338 / JCM 9278 / NBRC 100436 / V24Sta) (Thermoproteus neutrophilus), this protein is Shikimate dehydrogenase (NADP(+)).